Here is a 71-residue protein sequence, read N- to C-terminus: XETYGEPGNTPDDYVHAHNNIRRVLGMXPKXQGAIDGSSXVQLXLDEXLDYDYNXNKXIKPPGNVVGQLPY.

In terms of processing, glycosylated. High-mannose oligosaccharides (Man(5-9)GlcNAc(2)).

The sequence is that of Allergen Art v 2 from Artemisia vulgaris (Mugwort).